A 230-amino-acid chain; its full sequence is Large ribosomal subunit protein uL1 (230 aa).

Belongs to the universal ribosomal protein uL1 family. As to quaternary structure, part of the 50S ribosomal subunit.

Binds directly to 23S rRNA. The L1 stalk is quite mobile in the ribosome, and is involved in E site tRNA release. Functionally, protein L1 is also a translational repressor protein, it controls the translation of the L11 operon by binding to its mRNA. This Bifidobacterium longum (strain DJO10A) protein is Large ribosomal subunit protein uL1.